The following is a 593-amino-acid chain: Root phototropism protein 2 (593 aa).

In terms of domain architecture, BTB spans 32–100; that stretch reads TDVVVEVGEA…CYGVNFEITV (69 aa). The 283-residue stretch at 187–469 folds into the NPH3 domain; it reads NWWTEELCIL…LHALYYDQLK (283 aa). Tyr-410 carries the post-translational modification Phosphotyrosine.

Belongs to the NPH3 family. Interacts with RPT3 and PHOT1. Expressed in hypocotyls, guard cells and mesophyll cells.

It functions in the pathway protein modification; protein ubiquitination. Its function is as follows. May act as a substrate-specific adapter of an E3 ubiquitin-protein ligase complex (CUL3-RBX1-BTB) which mediates the ubiquitination and subsequent proteasomal degradation of target proteins. Signal transducer of the phototropic response and photo-induced movements. Necessary for root phototropism. Involved in hypocotyl phototropism under high rate but not under low rate light. Regulates stomata opening. Seems to be not involved in chloroplast accumulation and translocation. This Arabidopsis thaliana (Mouse-ear cress) protein is Root phototropism protein 2 (RPT2).